Here is a 221-residue protein sequence, read N- to C-terminus: Large ribosomal subunit protein uL3 (221 aa).

This sequence belongs to the universal ribosomal protein uL3 family. In terms of assembly, part of the 50S ribosomal subunit. Forms a cluster with proteins L14 and L19.

Its function is as follows. One of the primary rRNA binding proteins, it binds directly near the 3'-end of the 23S rRNA, where it nucleates assembly of the 50S subunit. The polypeptide is Large ribosomal subunit protein uL3 (Chlamydia muridarum (strain MoPn / Nigg)).